We begin with the raw amino-acid sequence, 175 residues long: NADH-quinone oxidoreductase subunit I (175 aa).

4Fe-4S ferredoxin-type domains lie at 64 to 93 and 110 to 139; these read KRDE…IIAD and SLYE…LTEE. [4Fe-4S] cluster-binding residues include Cys-73, Cys-76, Cys-79, Cys-83, Cys-119, Cys-122, Cys-125, and Cys-129.

Belongs to the complex I 23 kDa subunit family. In terms of assembly, NDH-1 is composed of 14 different subunits. Subunits NuoA, H, J, K, L, M, N constitute the membrane sector of the complex. [4Fe-4S] cluster serves as cofactor.

It localises to the cell inner membrane. The catalysed reaction is a quinone + NADH + 5 H(+)(in) = a quinol + NAD(+) + 4 H(+)(out). Its function is as follows. NDH-1 shuttles electrons from NADH, via FMN and iron-sulfur (Fe-S) centers, to quinones in the respiratory chain. The immediate electron acceptor for the enzyme in this species is believed to be ubiquinone. Couples the redox reaction to proton translocation (for every two electrons transferred, four hydrogen ions are translocated across the cytoplasmic membrane), and thus conserves the redox energy in a proton gradient. This Cytophaga hutchinsonii (strain ATCC 33406 / DSM 1761 / CIP 103989 / NBRC 15051 / NCIMB 9469 / D465) protein is NADH-quinone oxidoreductase subunit I.